Here is a 162-residue protein sequence, read N- to C-terminus: MLTMNDAPFWKTKSLTEMTGEEWESLCDGCGLCCLNKLEDWDTGEVVFTSVRCVLLDGESCRCSDYENRRATVPDCIQLDLKKVHEIGWLPPTCAYALVRDGKDLYWWHYLVSGDIETVHEAGISARGRTVSEAHVDVDDFEDYVVDWPLTVGEKAGEKQRT.

Belongs to the UPF0260 family.

The protein is UPF0260 protein Atu0932 of Agrobacterium fabrum (strain C58 / ATCC 33970) (Agrobacterium tumefaciens (strain C58)).